A 427-amino-acid chain; its full sequence is MEATAASTSLPDPGDFDRNVPRICGVCGDRATGFHFNAMTCEGCKGFFRRSMKRKALFTCPFNGDCRITKDNRRHCQACRLKRCVDIGMMKEFILTDEEVQRKREMILKRKEEEALKDSLRPKLSEEQQRIIAILLDAHHKTYDPTYADFGQFRPPVRGDEEEGTLPSRSSSAHAPSFSGSSSSSCSDQYTSSPDTMEPASFSHLDLSEEDSDDPSVTLDLSQLSMLPHLADLVSYSIQKVIGFAKMIPGFRDLTAEDQIVLLKSSAIEVIMLRSNQSFTMDDMSWTCGSRDYKYQVSDVAKAGHSLELIEPLIKFQVGLKKLNLHEEEHVLLMAICIVSPDRPGVQDPTLIEAIQDRLSNTLQTYIRCRHPPPGSHLLYAKMIQKLADLRSLNEEHSKQYRCLSFQPECSMKLTPLVLEVFGNEIS.

Positions 21–96 form a DNA-binding region, nuclear receptor; sequence PRICGVCGDR…IGMMKEFILT (76 aa). Zn(2+) is bound by residues Cys24, Cys27, Cys41, Cys44, Cys60, Cys66, Cys76, and Cys79. 2 NR C4-type zinc fingers span residues 24 to 44 and 60 to 79; these read CGVCGDRATGFHFNAMTCEGC and CPFNGDCRITKDNRRHCQAC. Residues 97 to 126 are hinge; it reads DEEVQRKREMILKRKEEEALKDSLRPKLSE. Residues 127-423 form the NR LBD domain; that stretch reads EQQRIIAILL…LTPLVLEVFG (297 aa). Position 143 (Tyr143) interacts with calcitriol. The segment at 149–201 is disordered; the sequence is DFGQFRPPVRGDEEEGTLPSRSSSAHAPSFSGSSSSSCSDQYTSSPDTMEPAS. Residues 168–193 are compositionally biased toward low complexity; the sequence is SRSSSAHAPSFSGSSSSSCSDQYTSS. Ser237 is a calcitriol binding site. The interaction with coactivator LXXLL motif stretch occupies residues 246 to 264; the sequence is KMIPGFRDLTAEDQIVLLK. Residues Arg274, Ser278, His305, and His397 each coordinate calcitriol. A 9aaTAD motif is present at residues 416 to 424; the sequence is PLVLEVFGN.

Belongs to the nuclear hormone receptor family. NR1 subfamily. In terms of assembly, homodimer in the absence of bound vitamin D3. Heterodimer with RXRA after vitamin D3 binding. Interacts with MED1, NCOA1, NCOA2, NCOA3 and NCOA6 coactivators, leading to a strong increase of transcription of target genes. Interacts with the corepressor NCOR1. Interacts with SNW1. Interacts with IRX4, the interaction does not affect its transactivation activity. Interacts with CRY1. Interacts with CRY2 in a ligand-dependent manner. Ubiquitinated by UBR5, leading to its degradation: UBR5 specifically recognizes and binds ligand-bound VDR when it is not associated with coactivators (NCOAs). In presence of NCOAs, the UBR5-degron is not accessible, preventing its ubiquitination and degradation.

The protein resides in the nucleus. The protein localises to the cytoplasm. Functionally, nuclear receptor for calcitriol, the active form of vitamin D3 which mediates the action of this vitamin on cells. Enters the nucleus upon vitamin D3 binding where it forms heterodimers with the retinoid X receptor/RXR. The VDR-RXR heterodimers bind to specific response elements on DNA and activate the transcription of vitamin D3-responsive target genes. Plays a central role in calcium homeostasis. Also functions as a receptor for the secondary bile acid lithocholic acid (LCA) and its metabolites. In Sus scrofa (Pig), this protein is Vitamin D3 receptor (VDR).